The following is an 822-amino-acid chain: Sushi domain-containing protein 2 (822 aa).

The signal sequence occupies residues 1–27 (MKPALLPWALLLLATALGPGPGPTADA). Residues 28-66 (QESCSMRCGALDGPCSCHPTCSGLGTCCLDFRDFCLEIL) form the SMB domain. Topologically, residues 28-785 (QESCSMRCGA…PKCQPGRSYA (758 aa)) are extracellular. 7 cysteine pairs are disulfide-bonded: cysteine 31–cysteine 35, cysteine 31–cysteine 44, cysteine 35–cysteine 62, cysteine 42–cysteine 44, cysteine 42–cysteine 55, cysteine 48–cysteine 54, and cysteine 55–cysteine 62. Asparagine 162 and asparagine 177 each carry an N-linked (GlcNAc...) asparagine glycan. The AMOP domain occupies 285 to 433 (PVAWARTQCQ…PDCPRYMQRR (149 aa)). Positions 445–639 (RLASAFGDPH…NWTVHNASSL (195 aa)) constitute a VWFD domain. The N-linked (GlcNAc...) asparagine glycan is linked to asparagine 522. The Sushi domain maps to 723–780 (VSCGWLAPPPNGQKEGNRYLAGSTIYFHCDNGYSLAGAETSTCQADGTWSSPTPKCQP). Disulfide bonds link cysteine 725/cysteine 765 and cysteine 751/cysteine 778. Residues 786–806 (VLLGIIFGGLAVVAAVALVYV) traverse the membrane as a helical segment. Topologically, residues 807 to 822 (LLRRRKGNTHVWGAQP) are cytoplasmic.

Interacts with LGALS1; leads to an increased amount of LGALS1 on the cell surface. Interacts with GPR15LG; the interaction is direct. In terms of tissue distribution, highly expressed in breast cancer, but shows a restricted expression pattern in normal tissues such as adipose, adrenal gland, kidney, lung, mammary gland, placenta, thyroid, trachea, and uterus. Also expressed in colon; down-regulated in colon cancer tissues.

The protein localises to the cell membrane. Its function is as follows. May be a cytokine receptor for GPR15LG. May be a tumor suppressor; together with GPR15LG has a growth inhibitory effect on colon cancer cells which includes G1 cell cycle arrest. May play a role in breast tumorigenesis. The chain is Sushi domain-containing protein 2 (SUSD2) from Homo sapiens (Human).